The following is a 246-amino-acid chain: Endonuclease V (246 aa).

Mg(2+) is bound by residues Asp50 and Asp120.

The protein belongs to the endonuclease V family. Mg(2+) is required as a cofactor.

It is found in the cytoplasm. It carries out the reaction Endonucleolytic cleavage at apurinic or apyrimidinic sites to products with a 5'-phosphate.. Functionally, DNA repair enzyme involved in the repair of deaminated bases. Selectively cleaves double-stranded DNA at the second phosphodiester bond 3' to a deoxyinosine leaving behind the intact lesion on the nicked DNA. The polypeptide is Endonuclease V (Gloeobacter violaceus (strain ATCC 29082 / PCC 7421)).